A 104-amino-acid polypeptide reads, in one-letter code: NADH-quinone oxidoreductase subunit K (104 aa).

3 helical membrane passes run 4 to 24 (VPAS…LFGA), 31 to 51 (VIVL…LVAF), and 67 to 87 (LFTM…LIAL).

It belongs to the complex I subunit 4L family. NDH-1 is composed of 14 different subunits. Subunits NuoA, H, J, K, L, M, N constitute the membrane sector of the complex.

It localises to the cell membrane. The catalysed reaction is a quinone + NADH + 5 H(+)(in) = a quinol + NAD(+) + 4 H(+)(out). Functionally, NDH-1 shuttles electrons from NADH, via FMN and iron-sulfur (Fe-S) centers, to quinones in the respiratory chain. The immediate electron acceptor for the enzyme in this species is believed to be a menaquinone. Couples the redox reaction to proton translocation (for every two electrons transferred, four hydrogen ions are translocated across the cytoplasmic membrane), and thus conserves the redox energy in a proton gradient. The chain is NADH-quinone oxidoreductase subunit K from Bacillus cereus (strain AH820).